Here is a 398-residue protein sequence, read N- to C-terminus: Phosphoglycerate kinase (398 aa).

Substrate-binding positions include 21 to 23 (DFN), Arg-36, 59 to 62 (HLGR), Arg-119, and Arg-157. Residues Lys-208, Gly-296, Glu-327, and 354-357 (GGDS) each bind ATP.

This sequence belongs to the phosphoglycerate kinase family. In terms of assembly, monomer.

It is found in the cytoplasm. The enzyme catalyses (2R)-3-phosphoglycerate + ATP = (2R)-3-phospho-glyceroyl phosphate + ADP. The protein operates within carbohydrate degradation; glycolysis; pyruvate from D-glyceraldehyde 3-phosphate: step 2/5. This is Phosphoglycerate kinase (pgk) from Lactococcus lactis subsp. lactis (strain IL1403) (Streptococcus lactis).